We begin with the raw amino-acid sequence, 55 residues long: Large ribosomal subunit protein bL33 (55 aa).

Belongs to the bacterial ribosomal protein bL33 family.

The chain is Large ribosomal subunit protein bL33 from Gluconobacter oxydans (strain 621H) (Gluconobacter suboxydans).